The following is a 2291-amino-acid chain: Spectrin beta chain (2291 aa).

The segment at 1-271 is actin-binding; the sequence is MTTDISIVRW…IITYVVTYYH (271 aa). Calponin-homology (CH) domains follow at residues 50-154 and 169-274; these read SVQK…LRFQ and KSAK…HYFS. Spectrin repeat units follow at residues 300 to 408, 420 to 521, 525 to 633, 636 to 739, 743 to 843, 848 to 948, 954 to 1057, 1060 to 1166, 1170 to 1272, 1276 to 1376, 1386 to 1484, 1488 to 1591, 1594 to 1697, 1701 to 1802, 1807 to 1909, 1913 to 2015, and 2020 to 2089; these read VHDY…ALRE, AARF…MRLE, QLQQ…RLEE, KLWQ…RLEN, YFQL…QRLL, LYKL…MDDL, VQTF…KLEE, DLHR…VLLS, DQQL…EKLK, KLHE…GAML, QQTC…KALE, EAFQ…HLLE, KVQQ…RLNE, LFML…TQML, ELHK…QKLA, DLFR…ENLQ, and VYQF…KEMK. The segment covering 2097-2140 has biased composition (basic and acidic residues); it reads EAERQRIKEEQEAKAASEAAEQAKREAERRDDVDVGASHDDSER. A disordered region spans residues 2097 to 2152; the sequence is EAERQRIKEEQEAKAASEAAEQAKREAERRDDVDVGASHDDSERGGTPGAGEGHEG. The PH domain maps to 2147-2259; sequence GEGHEGYVTR…WVTSLKAQSD (113 aa). At Ser-2195 the chain carries Phosphoserine. Polar residues predominate over residues 2262–2275; it reads AVAASRSQTLPATS. Positions 2262–2291 are disordered; the sequence is AVAASRSQTLPATSQKDEPKRRSFFTLKKK.

The protein belongs to the spectrin family. Native spectrin molecule is a tetramer composed of two antiparallel heterodimers joined head to head so that each end of the native molecule includes the C-terminus of the alpha subunit and the N-terminus of the beta subunit.

The protein resides in the cytoplasm. It is found in the cytoskeleton. Its subcellular location is the cell cortex. Spectrin is the major constituent of the cytoskeletal network underlying the erythrocyte plasma membrane. It associates with band 4.1 and actin to form the cytoskeletal superstructure of the erythrocyte plasma membrane. Interacts with calmodulin in a calcium-dependent manner. The chain is Spectrin beta chain (beta-Spec) from Drosophila melanogaster (Fruit fly).